The sequence spans 158 residues: Extracellular giant hemoglobin major globin subunit A2 (158 aa).

The N-terminal stretch at 1-16 is a signal peptide; sequence MKSLIVFACLVAYAAA. The region spanning 17 to 158 is the Globin domain; sequence DCTSLNRLLV…MNQIVSGISG (142 aa). Cys-18 and Cys-148 are oxidised to a cystine. Cys-89 is a binding site for hydrogen sulfide. His-110 provides a ligand contact to heme b.

It belongs to the globin family. In terms of assembly, the 400 kDa hemoglobin consists of a spherical 24-mer arranged as a double layer of dome-shaped dodecamers. Each dodecamer is composed of the 3-fold trimer of the tetramer A1-A2-B1-B2 having one intra-tetramer (A1-B2) disulfide bond and one inter-tetramer (B1-B2) disulfide bond per tetramer.

The protein resides in the secreted. Functionally, the extracellular giant hemoglobin is able to bind and transport oxygen and hydrosulfide simultaneously and reversibly at two different sites. The chain is Extracellular giant hemoglobin major globin subunit A2 (ghbA2) from Oligobrachia mashikoi (Beard worm).